Here is a 633-residue protein sequence, read N- to C-terminus: Threonine--tRNA ligase (633 aa).

Residues 1 to 61 form the TGS domain; it reads MINISFPDGS…DNDCRLRILT (61 aa). The tract at residues 242 to 533 is catalytic; that stretch reads DHRKLGKELD…LIEEYAGRFP (292 aa). The Zn(2+) site is built by C333, H384, and H510.

The protein belongs to the class-II aminoacyl-tRNA synthetase family. Homodimer. Requires Zn(2+) as cofactor.

The protein localises to the cytoplasm. It catalyses the reaction tRNA(Thr) + L-threonine + ATP = L-threonyl-tRNA(Thr) + AMP + diphosphate + H(+). Its function is as follows. Catalyzes the attachment of threonine to tRNA(Thr) in a two-step reaction: L-threonine is first activated by ATP to form Thr-AMP and then transferred to the acceptor end of tRNA(Thr). Also edits incorrectly charged L-seryl-tRNA(Thr). The protein is Threonine--tRNA ligase of Rickettsia bellii (strain OSU 85-389).